A 373-amino-acid chain; its full sequence is Sorting nexin-21 (373 aa).

The segment at 1 to 107 is disordered; that stretch reads MHRGTQEGAM…RSPPPDGQWG (107 aa). Over residues 21-37 the composition is skewed to low complexity; that stretch reads ALAGDGPGEAAASPEAE. Over residues 55–65 the composition is skewed to polar residues; it reads SRLSGTLSFTS. The span at 66 to 81 shows a compositional bias: acidic residues; it reads AEDDEDDEDEDDEEAG. In terms of domain architecture, PX spans 129–246; the sequence is QRLLFEVTSA…DFFVLPELRR (118 aa). Arg-171, Ser-173, Lys-198, and Arg-212 together coordinate a 1,2-diacyl-sn-glycero-3-phospho-(1D-myo-inositol-3-phosphate).

It belongs to the sorting nexin family. Monomer. In terms of tissue distribution, highly expressed in fetus liver, but only weakly expressed in brain, skeleton muscle, smooth muscle, and cardiac muscle, kidney, and adrenal gland.

It is found in the cytoplasmic vesicle membrane. The protein localises to the early endosome membrane. Its function is as follows. Binds to membranes enriched in phosphatidylinositol 3-phosphate (PtdIns(P3)) and phosphatidylinositol 4,5-bisphosphate. May be involved in several stages of intracellular trafficking. The protein is Sorting nexin-21 (SNX21) of Homo sapiens (Human).